Here is a 506-residue protein sequence, read N- to C-terminus: Nucleosome assembly protein 1-like 3 (506 aa).

Disordered regions lie at residues 1–95 (MAEA…LGTN) and 157–307 (PTEE…KRED). Residues 35 to 70 (SSSSSSSTSDSSSSSSTSGSSSGSGSSSSSSGSTSS) show a composition bias toward low complexity. The span at 157-178 (PTEEECEWNSEDEEFSSDEEVQ) shows a compositional bias: acidic residues. Residues 196–296 (PKENPEVKAE…ERLQDSVDLK (101 aa)) are compositionally biased toward basic and acidic residues.

It belongs to the nucleosome assembly protein (NAP) family.

Its subcellular location is the nucleus. This is Nucleosome assembly protein 1-like 3 (NAP1L3) from Homo sapiens (Human).